We begin with the raw amino-acid sequence, 243 residues long: Terpene cyclase ptmB (243 aa).

Transmembrane regions (helical) follow at residues 19–39, 48–68, and 78–98; these read IANL…VGMI, YGMA…YSLI, and GVFI…IKFA. Asn111 carries N-linked (GlcNAc...) asparagine glycosylation. Helical transmembrane passes span 112–132, 137–157, 172–194, and 205–225; these read LSLI…ALAA, SLAY…GGLC, LWLS…WMYW, and LVLW…ICYW.

Belongs to the paxB family.

Its subcellular location is the membrane. The protein operates within secondary metabolite biosynthesis. Functionally, terpene cyclase; part of the gene cluster that mediates the biosynthesis of the indole diterpenes penitrems. The geranylgeranyl diphosphate (GGPP) synthase ptmG catalyzes the first step in penitrem biosynthesis via conversion of farnesyl pyrophosphate and isopentyl pyrophosphate into geranylgeranyl pyrophosphate (GGPP). Condensation of indole-3-glycerol phosphate with GGPP by the prenyl transferase ptmC then forms 3-geranylgeranylindole (3-GGI). Epoxidation by the FAD-dependent monooxygenase ptmM leads to a epoxidized-GGI that is substrate of the terpene cyclase ptmB for cyclization to yield paspaline. Paspaline is subsequently converted to 13-desoxypaxilline by the cytochrome P450 monooxygenase ptmP, the latter being then converted to paxilline by the cytochrome P450 monooxygenase ptmQ. Paxilline is converted to beta-paxitriol via C-10 ketoreduction by the short-chain dehydrogenase ptmH which can be monoprenylated at the C-20 by the indole diterpene prenyltransferase ptmD. A two-step elimination (acetylation and elimination) process performed by the O-acetyltransferase ptmV and ptmI leads to the production of the prenylated form of penijanthine. The FAD-linked oxidoreductase ptmO then converts the prenylated form of penijanthine into PC-M5 which is in turn transformed into PC-M4 by the aromatic dimethylallyltransferase ptmE. Five sequential oxidative transformations performed by the cytochrome P450 monooxygenases ptmK, ptmU, ptmL, ptmN and ptmJ yield the various penitrem compounds. PtmK, ptmU and ptmM are involved in the formation of the key bicyclic ring of penitrem C via the formation of the intermediates secopenitrem D and penitrem D. PtmL catalyzes the epoxidation of penitrem D and C to yield penitrem B and F, respectively. PtmJ catalyzes the last benzylic hydroxylation to convert penitrem B to prenitrem E and penitrem F to penitrem A. The polypeptide is Terpene cyclase ptmB (Penicillium ochrochloron).